Consider the following 163-residue polypeptide: Photosystem II extrinsic protein V (163 aa).

The first 26 residues, 1 to 26 (MFRRLIGVVVATVLLTFQLIVGSATA), serve as a signal peptide directing secretion. 4 residues coordinate heme c: Cys-63, Cys-66, His-67, and His-118.

Belongs to the cytochrome c family. PsbV subfamily. PSII is composed of 1 copy each of membrane proteins PsbA, PsbB, PsbC, PsbD, PsbE, PsbF, PsbH, PsbI, PsbJ, PsbK, PsbL, PsbM, PsbT, PsbX, PsbY, PsbZ, Psb30/Ycf12, peripheral proteins PsbO, CyanoQ (PsbQ), PsbU, PsbV and a large number of cofactors. It forms dimeric complexes. Heme c is required as a cofactor.

The protein localises to the cellular thylakoid membrane. Its function is as follows. One of the extrinsic, lumenal subunits of photosystem II (PSII). PSII is a light-driven water plastoquinone oxidoreductase, using light energy to abstract electrons from H(2)O, generating a proton gradient subsequently used for ATP formation. The extrinsic proteins stabilize the structure of photosystem II oxygen-evolving complex (OEC), the ion environment of oxygen evolution and protect the OEC against heat-induced inactivation. Low-potential cytochrome c that plays a role in the OEC of PSII. This is Photosystem II extrinsic protein V from Trichormus variabilis (strain ATCC 29413 / PCC 7937) (Anabaena variabilis).